The sequence spans 246 residues: Flagellar brake protein YcgR (246 aa).

Residues 122–234 (QRREFFRIQT…PMETIIQRYV (113 aa)) form the PilZ domain.

This sequence belongs to the YcgR family. As to quaternary structure, monomer. Interacts with the flagellar basal bodies.

The protein resides in the bacterial flagellum basal body. Functionally, acts as a flagellar brake, regulating swimming and swarming in a bis-(3'-5') cyclic diguanylic acid (c-di-GMP)-dependent manner. Binds 1 c-di-GMP dimer per subunit. Increasing levels of c-di-GMP lead to decreased motility. This chain is Flagellar brake protein YcgR, found in Chromobacterium violaceum (strain ATCC 12472 / DSM 30191 / JCM 1249 / CCUG 213 / NBRC 12614 / NCIMB 9131 / NCTC 9757 / MK).